A 431-amino-acid chain; its full sequence is Glutamate--tRNA ligase 1 (431 aa).

The 'HIGH' region signature appears at 11–21 (PSPTGDLHLGG). The 'KMSKS' region motif lies at 203–207 (KLSKR). K206 contacts ATP.

This sequence belongs to the class-I aminoacyl-tRNA synthetase family. Glutamate--tRNA ligase type 1 subfamily. As to quaternary structure, monomer.

The protein resides in the cytoplasm. The catalysed reaction is tRNA(Glu) + L-glutamate + ATP = L-glutamyl-tRNA(Glu) + AMP + diphosphate. In terms of biological role, catalyzes the attachment of glutamate to tRNA(Glu) in a two-step reaction: glutamate is first activated by ATP to form Glu-AMP and then transferred to the acceptor end of tRNA(Glu). This Rubrobacter xylanophilus (strain DSM 9941 / JCM 11954 / NBRC 16129 / PRD-1) protein is Glutamate--tRNA ligase 1.